The following is a 426-amino-acid chain: Probable histidine--tRNA ligase (426 aa).

This sequence belongs to the class-II aminoacyl-tRNA synthetase family. As to quaternary structure, homodimer.

The protein resides in the cytoplasm. The catalysed reaction is tRNA(His) + L-histidine + ATP = L-histidyl-tRNA(His) + AMP + diphosphate + H(+). This Tropheryma whipplei (strain TW08/27) (Whipple's bacillus) protein is Probable histidine--tRNA ligase (hisS).